The chain runs to 76 residues: Small ribosomal subunit protein uS17 (76 aa).

This sequence belongs to the universal ribosomal protein uS17 family. As to quaternary structure, part of the 30S ribosomal subunit.

Functionally, one of the primary rRNA binding proteins, it binds specifically to the 5'-end of 16S ribosomal RNA. The protein is Small ribosomal subunit protein uS17 of Dinoroseobacter shibae (strain DSM 16493 / NCIMB 14021 / DFL 12).